Reading from the N-terminus, the 431-residue chain is MAFHHNHLSQDLSFNHFTDQHQPPPPQPPPPPPQQQQHFQEAPPPNWLNTALLRSSDNNNNFLNLHTATANTTTASSSDSPSSAAAAAAANQWLSRSSSFLQRNNNNNASIVGDGIDDVTGGADTMIQGEMKTGGGENKNDGGGATAADGVVSWQNARHKAEILSHPLYEQLLSAHVACLRIATPVDQLPRIDAQLAQSQHVVAKYSALGAAAQGLVGDDKELDQFMTHYVLLLCSFKEQLQQHVRVHAMEAVMACWEIEQSLQSLTGVSPGEGMGATMSDDEDEQVESDANMFDGGLDVLGFGPLIPTESERSLMERVRQELKHELKQGYKEKIVDIREEILRKRRAGKLPGDTTSVLKAWWQSHSKWPYPTEEDKARLVQETGLQLKQINNWFINQRKRNWHSNPSSSTVLKNKRKSNAGDNSGRERFA.

The interval Asn15–Trp47 is disordered. Residues Gln22–Gln34 are compositionally biased toward pro residues. One can recognise an ELK domain in the interval Glu322–Ile342. The homeobox; TALE-type DNA-binding region spans Leu343–Asn406. The segment at Asn402–Ala431 is disordered. Positions His404–Leu413 are enriched in polar residues.

This sequence belongs to the TALE/KNOX homeobox family. May form heterodimeric complex with the TALE/BELL proteins. Interacts with OFP1, OFP2, OFP4, OFP12 and OFP14. Interacts with KNATM-B.

The protein resides in the nucleus. The sequence is that of Homeobox protein knotted-1-like 3 (KNAT3) from Arabidopsis thaliana (Mouse-ear cress).